The primary structure comprises 403 residues: CCA-adding enzyme (403 aa).

ATP is bound by residues G32 and R35. CTP-binding residues include G32 and R35. The Mg(2+) site is built by D45 and D47. ATP is bound by residues R116, D159, R162, R165, and R168. CTP contacts are provided by R116, D159, R162, R165, and R168.

This sequence belongs to the tRNA nucleotidyltransferase/poly(A) polymerase family. Bacterial CCA-adding enzyme type 3 subfamily. In terms of assembly, homodimer. It depends on Mg(2+) as a cofactor.

It carries out the reaction a tRNA precursor + 2 CTP + ATP = a tRNA with a 3' CCA end + 3 diphosphate. The enzyme catalyses a tRNA with a 3' CCA end + 2 CTP + ATP = a tRNA with a 3' CCACCA end + 3 diphosphate. Its function is as follows. Catalyzes the addition and repair of the essential 3'-terminal CCA sequence in tRNAs without using a nucleic acid template. Adds these three nucleotides in the order of C, C, and A to the tRNA nucleotide-73, using CTP and ATP as substrates and producing inorganic pyrophosphate. tRNA 3'-terminal CCA addition is required both for tRNA processing and repair. Also involved in tRNA surveillance by mediating tandem CCA addition to generate a CCACCA at the 3' terminus of unstable tRNAs. While stable tRNAs receive only 3'-terminal CCA, unstable tRNAs are marked with CCACCA and rapidly degraded. The sequence is that of CCA-adding enzyme from Limosilactobacillus reuteri (strain DSM 20016) (Lactobacillus reuteri).